The following is a 298-amino-acid chain: Protein OS-9 homolog (298 aa).

The N-terminal stretch at 1–25 is a signal peptide; it reads MGLAGGARVVLFVVAAAAAAALTAA. N95 carries an N-linked (GlcNAc...) asparagine glycan. In terms of domain architecture, MRH spans 121–246; sequence DQCFYRHEGW…TVQSPMLCKN (126 aa). Cysteines 123 and 136 form a disulfide. Positions 130, 131, and 143 each coordinate a mannooligosaccharide derivative. 2 N-linked (GlcNAc...) asparagine glycosylation sites follow: N171 and N197. Cystine bridges form between C201-C232 and C216-C244. Positions 202, 208, 228, and 234 each coordinate a mannooligosaccharide derivative.

This sequence belongs to the OS-9 family. Interacts with HRD3.

It localises to the endoplasmic reticulum. In terms of biological role, lectin which functions in endoplasmic reticulum (ER) quality control and ER-associated degradation (ERAD). May bind terminally misfolded non-glycosylated proteins as well as improperly folded glycoproteins, retain them in the ER, and possibly transfer them to the ubiquitination machinery and promote their degradation. The protein is Protein OS-9 homolog of Oryza sativa subsp. japonica (Rice).